The primary structure comprises 249 residues: 3alpha-hydroxy bile acid-CoA-ester 3-dehydrogenase 2 (249 aa).

Residues 15–18 (TRGI), glutamate 38, glutamate 42, and asparagine 92 contribute to the NAD(+) site. Residue serine 144 coordinates substrate. Catalysis depends on proton donor/acceptor residues tyrosine 157 and lysine 161. NAD(+) is bound by residues lysine 161 and 190-192 (VNT).

Belongs to the short-chain dehydrogenases/reductases (SDR) family. As to quaternary structure, homotetramer.

The enzyme catalyses a 3alpha-hydroxy bile acid CoA + NAD(+) = a 3-oxo bile acid CoA + NADH + H(+). It carries out the reaction choloyl-CoA + NAD(+) = 7alpha,12alpha-dihydroxy-3-oxochol-24-oyl-CoA + NADH + H(+). The catalysed reaction is chenodeoxycholoyl-CoA + NAD(+) = 7alpha-hydroxy-3-oxochol-24-oyl-CoA + NADH + H(+). It catalyses the reaction deoxycholoyl-CoA + NAD(+) = 12alpha-hydroxy-3-oxocholan-24-oyl-CoA + NADH + H(+). The enzyme catalyses lithocholoyl-CoA + NAD(+) = 3-oxocholan-24-oyl-CoA + NADH + H(+). It participates in lipid metabolism; bile acid biosynthesis. Its function is as follows. Involved in the multi-step bile acid 7alpha-dehydroxylation pathway that transforms primary bile acids to secondary bile acids in the human gut. Catalyzes the oxidation of C3-hydroxyl group of CoA conjugated bile acids generating a C3-oxo bile acid intermediate. Can use choloyl-CoA, chenodeoxycholoyl-CoA, deoxycholoyl-CoA, and lithocholoyl-CoA as substrates with similar efficiency. Highly prefers NAD over NADP as cosubstrate. Also catalyzes the reverse reactions; in vitro, the preferred direction of reaction depends on the pH. Has very little activity with unconjugated (non-CoA) bile acid substrates. This is 3alpha-hydroxy bile acid-CoA-ester 3-dehydrogenase 2 (baiA2) from Clostridium scindens (strain JCM 10418 / VPI 12708).